Here is an 84-residue protein sequence, read N- to C-terminus: Large ribosomal subunit protein bL27 (84 aa).

The segment at 1–22 is disordered; the sequence is MAHKKGASSTRNGRDSNAQRLG. Over residues 7–19 the composition is skewed to polar residues; it reads ASSTRNGRDSNAQ.

The protein belongs to the bacterial ribosomal protein bL27 family.

This is Large ribosomal subunit protein bL27 from Streptomyces coelicolor (strain ATCC BAA-471 / A3(2) / M145).